A 473-amino-acid chain; its full sequence is Bifunctional protein HldE (473 aa).

Residues 1-318 (MKLSMPRFDQ…RAVQREEGSE (318 aa)) are ribokinase. 194 to 197 (NLGE) is a binding site for ATP. Residue aspartate 263 is part of the active site. The tract at residues 343 to 473 (FTNGCFDILH…TAIVEKIRKA (131 aa)) is cytidylyltransferase.

The protein in the N-terminal section; belongs to the carbohydrate kinase PfkB family. It in the C-terminal section; belongs to the cytidylyltransferase family. As to quaternary structure, homodimer.

The enzyme catalyses D-glycero-beta-D-manno-heptose 7-phosphate + ATP = D-glycero-beta-D-manno-heptose 1,7-bisphosphate + ADP + H(+). The catalysed reaction is D-glycero-beta-D-manno-heptose 1-phosphate + ATP + H(+) = ADP-D-glycero-beta-D-manno-heptose + diphosphate. It participates in nucleotide-sugar biosynthesis; ADP-L-glycero-beta-D-manno-heptose biosynthesis; ADP-L-glycero-beta-D-manno-heptose from D-glycero-beta-D-manno-heptose 7-phosphate: step 1/4. Its pathway is nucleotide-sugar biosynthesis; ADP-L-glycero-beta-D-manno-heptose biosynthesis; ADP-L-glycero-beta-D-manno-heptose from D-glycero-beta-D-manno-heptose 7-phosphate: step 3/4. Functionally, catalyzes the phosphorylation of D-glycero-D-manno-heptose 7-phosphate at the C-1 position to selectively form D-glycero-beta-D-manno-heptose-1,7-bisphosphate. In terms of biological role, catalyzes the ADP transfer from ATP to D-glycero-beta-D-manno-heptose 1-phosphate, yielding ADP-D-glycero-beta-D-manno-heptose. The sequence is that of Bifunctional protein HldE from Stutzerimonas stutzeri (strain A1501) (Pseudomonas stutzeri).